The sequence spans 219 residues: Leucyl/phenylalanyl-tRNA--protein transferase (219 aa).

Belongs to the L/F-transferase family.

Its subcellular location is the cytoplasm. It catalyses the reaction N-terminal L-lysyl-[protein] + L-leucyl-tRNA(Leu) = N-terminal L-leucyl-L-lysyl-[protein] + tRNA(Leu) + H(+). The enzyme catalyses N-terminal L-arginyl-[protein] + L-leucyl-tRNA(Leu) = N-terminal L-leucyl-L-arginyl-[protein] + tRNA(Leu) + H(+). It carries out the reaction L-phenylalanyl-tRNA(Phe) + an N-terminal L-alpha-aminoacyl-[protein] = an N-terminal L-phenylalanyl-L-alpha-aminoacyl-[protein] + tRNA(Phe). Functionally, functions in the N-end rule pathway of protein degradation where it conjugates Leu, Phe and, less efficiently, Met from aminoacyl-tRNAs to the N-termini of proteins containing an N-terminal arginine or lysine. This Leptospira interrogans serogroup Icterohaemorrhagiae serovar copenhageni (strain Fiocruz L1-130) protein is Leucyl/phenylalanyl-tRNA--protein transferase.